Reading from the N-terminus, the 830-residue chain is Cyclin-dependent kinase inhibitor FAR1 (830 aa).

A disordered region spans residues 1–31; that stretch reads MKTPTRVSFEKKIHTPPSGDRDAERSPPKKF. The segment covering 8–27 has biased composition (basic and acidic residues); it reads SFEKKIHTPPSGDRDAERSP. Phosphoserine; by CDC28 is present on serine 87. 2 positions are modified to phosphoserine: serine 110 and serine 114. The RING-type zinc-finger motif lies at 202-252; sequence CLICEESISSTFTGEKVVESTCSHTSHYNCYLMLFETLYFQGKFPECKICG. Threonine 306 is modified (phosphothreonine).

In terms of assembly, associates with the CDC28-CLN complex. Post-translationally, thought to be phosphorylated by MAP kinase FUS3. Thought to enhance the binding of FAR1 to G1-specific cyclin-dependent kinase (CDK) complexes.

Its function is as follows. Inhibitor of the cyclin-dependent kinase CDC28. Necessary for cell cycle arrest. Involved in pheromone response. Contributes to mating efficiency. Required for oriented polarization of yeast cells in response to mating pheromones. In Saccharomyces cerevisiae (strain ATCC 204508 / S288c) (Baker's yeast), this protein is Cyclin-dependent kinase inhibitor FAR1 (FAR1).